Reading from the N-terminus, the 277-residue chain is MDNIVKVNNISFEYITDEAKLKAIDNLSLDVKKGEFVAIIGHNGSGKSTLSKNLNAILMPTEGNILIDDMDTKEEERLWDIRQTAGMVFQNPDNQIVATIVEEDVAFGPENLGIEPKEIRRIVEESLKSVGMYDLRDRQPHLLSGGQKQRVAIAGIIAMRPKCIIFDEATAMLDPSGRKEVMKTIKRLNKEENITVIHITHFMEEAVEADRVVVMEKGKKILEGTPREVFSKIKMLKEIGLDVPCMTELSSLLIEEGINISSDILTVDEMVMELCQL.

The region spanning 5-242 (VKVNNISFEY…IKMLKEIGLD (238 aa)) is the ABC transporter domain. 41 to 48 (GHNGSGKS) lines the ATP pocket.

This sequence belongs to the ABC transporter superfamily. Energy-coupling factor EcfA family. Forms a stable energy-coupling factor (ECF) transporter complex composed of 2 membrane-embedded substrate-binding proteins (S component), 2 ATP-binding proteins (A component) and 2 transmembrane proteins (T component).

Its subcellular location is the cell membrane. In terms of biological role, ATP-binding (A) component of a common energy-coupling factor (ECF) ABC-transporter complex. Unlike classic ABC transporters this ECF transporter provides the energy necessary to transport a number of different substrates. In Clostridioides difficile (strain 630) (Peptoclostridium difficile), this protein is Energy-coupling factor transporter ATP-binding protein EcfA1.